The primary structure comprises 459 residues: Bifunctional protein GlmU (459 aa).

The segment at 1–230 is pyrophosphorylase; that stretch reads MVKRYAVILA…FEETIGVNDR (230 aa). UDP-N-acetyl-alpha-D-glucosamine-binding positions include 9–12, lysine 23, glutamine 73, and 78–79; these read LAAG and GT. Aspartate 103 is a binding site for Mg(2+). Glycine 140, glutamate 155, asparagine 170, and asparagine 228 together coordinate UDP-N-acetyl-alpha-D-glucosamine. Mg(2+) is bound at residue asparagine 228. The tract at residues 231-251 is linker; the sequence is VALAEAEKIMRERICRKHMMN. Residues 252-459 are N-acetyltransferase; it reads GVTIIDPAHT…VDRLSIKKNS (208 aa). Positions 333 and 351 each coordinate UDP-N-acetyl-alpha-D-glucosamine. Histidine 363 (proton acceptor) is an active-site residue. Residues tyrosine 366 and asparagine 377 each coordinate UDP-N-acetyl-alpha-D-glucosamine. Acetyl-CoA-binding positions include 386-387, alanine 423, and arginine 440; that span reads NY.

The protein in the N-terminal section; belongs to the N-acetylglucosamine-1-phosphate uridyltransferase family. In the C-terminal section; belongs to the transferase hexapeptide repeat family. In terms of assembly, homotrimer. The cofactor is Mg(2+).

The protein resides in the cytoplasm. The enzyme catalyses alpha-D-glucosamine 1-phosphate + acetyl-CoA = N-acetyl-alpha-D-glucosamine 1-phosphate + CoA + H(+). The catalysed reaction is N-acetyl-alpha-D-glucosamine 1-phosphate + UTP + H(+) = UDP-N-acetyl-alpha-D-glucosamine + diphosphate. It functions in the pathway nucleotide-sugar biosynthesis; UDP-N-acetyl-alpha-D-glucosamine biosynthesis; N-acetyl-alpha-D-glucosamine 1-phosphate from alpha-D-glucosamine 6-phosphate (route II): step 2/2. The protein operates within nucleotide-sugar biosynthesis; UDP-N-acetyl-alpha-D-glucosamine biosynthesis; UDP-N-acetyl-alpha-D-glucosamine from N-acetyl-alpha-D-glucosamine 1-phosphate: step 1/1. Its pathway is bacterial outer membrane biogenesis; LPS lipid A biosynthesis. Catalyzes the last two sequential reactions in the de novo biosynthetic pathway for UDP-N-acetylglucosamine (UDP-GlcNAc). The C-terminal domain catalyzes the transfer of acetyl group from acetyl coenzyme A to glucosamine-1-phosphate (GlcN-1-P) to produce N-acetylglucosamine-1-phosphate (GlcNAc-1-P), which is converted into UDP-GlcNAc by the transfer of uridine 5-monophosphate (from uridine 5-triphosphate), a reaction catalyzed by the N-terminal domain. This chain is Bifunctional protein GlmU, found in Geobacillus sp. (strain WCH70).